A 565-amino-acid polypeptide reads, in one-letter code: Inositol-3-phosphate synthase (565 aa).

NAD(+) is bound by residues Gly-70, Gly-71, Asn-72, Asn-73, Asp-144, Ser-180, Ile-181, Gln-191, Arg-194, Thr-231, Ala-232, Asn-233, Thr-234, Gly-282, Ser-283, Asp-307, Ser-310, Asn-341, Asn-342, Asp-343, Lys-356, Gly-394, Asp-395, Asp-423, and Ser-424. Ser-536 bears the Phosphoserine mark. Residues 546–565 form a disordered region; that stretch reads LHANGHSNGSAKLATNGNGH. The segment covering 550–565 has biased composition (polar residues); it reads GHSNGSAKLATNGNGH.

It belongs to the myo-inositol 1-phosphate synthase family. The cofactor is NAD(+). In terms of tissue distribution, higher expression in adult heads than bodies.

The protein resides in the cytoplasm. The enzyme catalyses D-glucose 6-phosphate = 1D-myo-inositol 3-phosphate. The protein operates within polyol metabolism; myo-inositol biosynthesis; myo-inositol from D-glucose 6-phosphate: step 1/2. Key enzyme in myo-inositol biosynthesis pathway that catalyzes the conversion of glucose 6-phosphate to 1-myo-inositol 1-phosphate in a NAD-dependent manner. Rate-limiting enzyme in the synthesis of all inositol-containing compounds. The polypeptide is Inositol-3-phosphate synthase (Inos) (Drosophila melanogaster (Fruit fly)).